Here is a 384-residue protein sequence, read N- to C-terminus: Probable protein phosphatase 2C 48 (384 aa).

The region spanning 47-358 (ITGEFSMAVV…DDITVIVVFL (312 aa)) is the PPM-type phosphatase domain. Position 78 is a phosphoserine (Ser-78). Residues Asp-89, Gly-90, Asp-290, and Asp-349 each contribute to the Mn(2+) site.

Belongs to the PP2C family. Mg(2+) is required as a cofactor. Requires Mn(2+) as cofactor.

The enzyme catalyses O-phospho-L-seryl-[protein] + H2O = L-seryl-[protein] + phosphate. It carries out the reaction O-phospho-L-threonyl-[protein] + H2O = L-threonyl-[protein] + phosphate. Its function is as follows. May dephosphorylate and repress plasma membrane H(+)-ATPases (PM H(+)-ATPases, e.g. AHA1 and AHA2), thus influencing negatively plant growth and fitness. This Arabidopsis thaliana (Mouse-ear cress) protein is Probable protein phosphatase 2C 48.